Reading from the N-terminus, the 588-residue chain is Adenine deaminase (588 aa).

This sequence belongs to the metallo-dependent hydrolases superfamily. Adenine deaminase family. In terms of assembly, homodimer. It depends on Mn(2+) as a cofactor.

The catalysed reaction is adenine + H2O + H(+) = hypoxanthine + NH4(+). The chain is Adenine deaminase from Escherichia coli (strain SMS-3-5 / SECEC).